Consider the following 338-residue polypeptide: Peptidoglycan deacetylase-like protein FGM2 (338 aa).

Zn(2+) is bound by residues Asp49, His124, and His128. The NodB homology domain maps to 65–257; it reads LSDYSAGIFA…VTNSHGFVSS (193 aa).

The protein belongs to the polysaccharide deacetylase family.

In terms of biological role, peptidoglycan deacetylase-like protein; part of the Fg3_54/C64 gene cluster that mediates the biosynthesis of the octapeptide fusaoctaxin A, a virulence factor that is required for cell-to-cell invasiveness of plant host. The 2 nonribosomal peptide synthetases NRPS9 and NRPS5 form an assembly line which likely utilizes GABA as a starter unit (loaded on the unique module M1 of NRPS9) and sequentially incorporates seven extender units composed of the residues L-Ala, L-allo-Ile, L-Ser, L-Val, L-Ser, L-Leu and L-Leu, respectively. During the process, each of the residues that are tethered on modules M3-M7 of NRPS5 containing an E domain can undergo an epimerization reaction to produce a D-configuration before the transpeptidation reaction occurs. The elongation of the peptidyl chain might be terminated by module M8-mediated L-Leu incorporation, followed by R domain-catalyzed 4 electron reduction to release the resulting octapeptide from the assembly line as an alcohol. Fusaoctaxin A is cleaved by the cluster specific ABC transporter FGM5 to the pentapeptide fusapentaxin A and the tripeptide fusatrixin A. The other enzymes from the cluster, FGM1, FGM2, FGM3 and FGM9 seem not to be involved in the biosynthesis of fusaoctaxin A and their functions have still to be determined. The protein is Peptidoglycan deacetylase-like protein FGM2 of Gibberella zeae (strain ATCC MYA-4620 / CBS 123657 / FGSC 9075 / NRRL 31084 / PH-1) (Wheat head blight fungus).